The chain runs to 1548 residues: Multidrug resistance protein (1548 aa).

The Cytoplasmic segment spans residues 1–238; sequence MVDNGHVTIA…YHVWAQILPK (238 aa). In terms of domain architecture, ABC transmembrane type-1 1 spans 231–514; the sequence is VWAQILPKLL…IPIIISSILQ (284 aa). The helical transmembrane segment at 239 to 256 threads the bilayer; the sequence is LLSDVTALMLPVLLEYFV. Asn263 carries N-linked (GlcNAc...) asparagine glycosylation. 5 helical membrane-spanning segments follow: residues 266–287, 349–367, 375–392, 463–480, and 500–519; these read WGWGLGLALTIFLTNVIQSCSA, VMYFWSAPLQLVLCLLLLI, VPGMAVLFVTLPLQAVIS, ATPTLVIAVVFILYHVSG, and VSFFMIPIIISSILQCFVSA. At 520-932 the chain is on the cytoplasmic side; the sequence is KRVTAFIECP…PWSTYVAYLK (413 aa). Positions 634–855 constitute an ABC transporter 1 domain; sequence VEEGDREYYQ…ALEETLRGEL (222 aa). 667 to 674 is a binding site for ATP; it reads GSTGSGKS. Helical transmembrane passes span 933–950, 975–993, 1051–1070, and 1072–1088; these read SCGGLEAWGCLLATFALT, TYLYVYLFIVFLEIFGSPL, GYLYLLEYFFSMCSTVIIMV, and VQPFVLVAIVPCVYSYY. The 282-residue stretch at 940–1221 folds into the ABC transmembrane type-1 2 domain; that stretch reads WGCLLATFAL…LVRQVAMVEA (282 aa). Residues Asn1095 and Asn1154 are each glycosylated (N-linked (GlcNAc...) asparagine). 2 consecutive transmembrane segments (helical) span residues 1164 to 1182 and 1186 to 1205; these read LEFLSCVVTFMVAFIGVIG and GASSQNIGLISLSLTMSMTL. Over 1206–1548 the chain is Cytoplasmic; that stretch reads TETLNWLVRQ…RIVQPAVLSD (343 aa). The region spanning 1286–1521 is the ABC transporter 2 domain; it reads LVLEGVQMRY…HQSMFHSMVE (236 aa). 1320 to 1327 is an ATP binding site; sequence GRTGSGKS.

The protein belongs to the ABC transporter superfamily. ABCB family. Multidrug resistance exporter (TC 3.A.1.201) subfamily.

It is found in the membrane. It carries out the reaction ATP + H2O + xenobioticSide 1 = ADP + phosphate + xenobioticSide 2.. The chain is Multidrug resistance protein (PGPA) from Leishmania tarentolae (Sauroleishmania tarentolae).